The following is a 1197-amino-acid chain: Serine/threonine-protein kinase pakA (1197 aa).

5 disordered regions span residues 1–96 (MEEK…PIYR), 328–383 (QKED…KNID), 430–468 (REEE…EQRN), 485–543 (EEEE…NLMG), and 562–819 (NSSG…RVGT). The segment covering 19–30 (QKFEQFLDKTDK) has biased composition (basic and acidic residues). Polar residues predominate over residues 34-49 (ATRNNYRGPVSSSTGI). The segment covering 51-69 (NDKEKKSHSYFKVREEGSN) has biased composition (basic and acidic residues). The span at 70 to 79 (KRPSSFSASN) shows a compositional bias: polar residues. Composition is skewed to low complexity over residues 80-94 (PITP…SSPI) and 346-381 (NNNN…NNKN). Over residues 439–458 (RVERELASRRRQEEDRIKRE) the composition is skewed to basic and acidic residues. Over residues 494–523 (SQLQSSQQQQKSSSTQRSSNTVTSTSSSST) the composition is skewed to low complexity. Over residues 524–536 (GGDSNPSTSQKPT) the composition is skewed to polar residues. Thr-585 is subject to Phosphothreonine; by PKB. Residues 593–615 (SENTPLVSSIDNNGVNNKMSRSH) show a composition bias toward polar residues. Composition is skewed to low complexity over residues 636–653 (NVNN…NNNH) and 671–707 (SSSM…SSPT). Residues 718-727 (TTSTGSTRKG) show a composition bias toward polar residues. Residues 728–737 (SISEREDKKK) show a composition bias toward basic and acidic residues. Residues 739 to 756 (SSSSTSSSSSSNGGLSSS) are compositionally biased toward low complexity. Basic and acidic residues predominate over residues 757–790 (GKDHKKDHSSEEKEKEKKSFFNKLFSKEKKDHHS). Residues 817–830 (VGTPFNVKHDVHVN) enclose the CRIB domain. A Protein kinase domain is found at 911 to 1164 (YYNINKIGEG…SSSLLHHPFL (254 aa)). ATP-binding positions include 917 to 925 (IGEGGAGEV) and Lys-940. Asp-1032 serves as the catalytic Proton acceptor.

It belongs to the protein kinase superfamily. STE Ser/Thr protein kinase family. STE20 subfamily. It depends on Mg(2+) as a cofactor. Phosphorylation on Thr-585 results in cAMP-mediated activation and localization to the cytoskeleton. In terms of tissue distribution, colocalizes with myosin II to the cleavage furrow of cells undergoing cytokinesis and the posterior cortex of polarized cells.

The protein resides in the cytoplasm. Its subcellular location is the cytosol. It localises to the cytoskeleton. The enzyme catalyses L-seryl-[protein] + ATP = O-phospho-L-seryl-[protein] + ADP + H(+). It carries out the reaction L-threonyl-[protein] + ATP = O-phospho-L-threonyl-[protein] + ADP + H(+). Functionally, regulator of the myosin II component of the cytoskeleton: required for regulation of cytokinesis. Functions during chemotaxis, required for maintaining the direction of cell movement, suppressing lateral pseudopod extension, and proper retraction of the posterior of chemotaxing cells. The polypeptide is Serine/threonine-protein kinase pakA (pakA) (Dictyostelium discoideum (Social amoeba)).